Here is a 1093-residue protein sequence, read N- to C-terminus: Receptor-mediated endocytosis protein 6 (1093 aa).

The Ras-GAP domain maps to 156–389 (LKIAQVVCNL…EMMDALLVEK (234 aa)). 2 disordered regions span residues 547–610 (DLEK…GGEQ) and 643–669 (RSGS…DVAT). 2 stretches are compositionally biased toward polar residues: residues 568-577 (IDFSSGSAET) and 584-598 (DSTS…STEE). In terms of domain architecture, VPS9 spans 955 to 1093 (HHRDKLLRGT…SAVEYIKTIL (139 aa)).

This sequence belongs to the GAPVD1 family. As to quaternary structure, interacts with GDP-bound rab-5. Interacts with alpha-adaptin.

The protein resides in the membrane. The protein localises to the cytoplasmic vesicle. It localises to the clathrin-coated vesicle. Functionally, acts both as a GTPase-activating protein (GAP) and a guanine nucleotide exchange factor (GEF), and participates in endocytosis. Acts by regulating the activation of rab-5 by exchanging bound GDP for free GTP at clathrin coated pits. In Caenorhabditis elegans, this protein is Receptor-mediated endocytosis protein 6 (rme-6).